The sequence spans 213 residues: Protein arginine N-methyltransferase SFM1 (213 aa).

Residues Ser-204 and Ser-207 each carry the phosphoserine modification.

It belongs to the class IV-like SAM-binding methyltransferase superfamily. Protein arginine N-methyltransferase SFM1 family.

The protein resides in the cytoplasm. In terms of biological role, S-adenosyl-L-methionine-dependent protein-arginine N-methyltransferase that monomethylates ribosomal protein S3 (RPS3) at 'Arg-146'. In Saccharomyces cerevisiae (strain ATCC 204508 / S288c) (Baker's yeast), this protein is Protein arginine N-methyltransferase SFM1.